The following is a 250-amino-acid chain: Ribosomal RNA small subunit methyltransferase J (250 aa).

S-adenosyl-L-methionine contacts are provided by residues 101–102 (RD), 117–118 (ER), 153–154 (SS), and Asp-171.

It belongs to the methyltransferase superfamily. RsmJ family.

Its subcellular location is the cytoplasm. The enzyme catalyses guanosine(1516) in 16S rRNA + S-adenosyl-L-methionine = N(2)-methylguanosine(1516) in 16S rRNA + S-adenosyl-L-homocysteine + H(+). In terms of biological role, specifically methylates the guanosine in position 1516 of 16S rRNA. In Escherichia coli (strain SMS-3-5 / SECEC), this protein is Ribosomal RNA small subunit methyltransferase J.